Reading from the N-terminus, the 693-residue chain is Glycine--tRNA ligase beta subunit (693 aa).

Belongs to the class-II aminoacyl-tRNA synthetase family. Tetramer of two alpha and two beta subunits.

It is found in the cytoplasm. The catalysed reaction is tRNA(Gly) + glycine + ATP = glycyl-tRNA(Gly) + AMP + diphosphate. The sequence is that of Glycine--tRNA ligase beta subunit from Vibrio vulnificus (strain CMCP6).